Consider the following 603-residue polypeptide: DNA mismatch repair protein MutL (603 aa).

The segment covering isoleucine 337–serine 347 has biased composition (basic and acidic residues). The interval isoleucine 337 to proline 383 is disordered.

This sequence belongs to the DNA mismatch repair MutL/HexB family.

Its function is as follows. This protein is involved in the repair of mismatches in DNA. It is required for dam-dependent methyl-directed DNA mismatch repair. May act as a 'molecular matchmaker', a protein that promotes the formation of a stable complex between two or more DNA-binding proteins in an ATP-dependent manner without itself being part of a final effector complex. This Listeria monocytogenes serotype 4b (strain F2365) protein is DNA mismatch repair protein MutL.